We begin with the raw amino-acid sequence, 278 residues long: Inosose isomerase (278 aa).

A divalent metal cation is bound by residues glutamate 142, aspartate 174, histidine 200, and glutamate 246.

Belongs to the IolI family. Requires Mn(2+) as cofactor. It depends on Fe(2+) as a cofactor. Co(2+) serves as cofactor.

It catalyses the reaction scyllo-inosose = scyllo-inosine. The protein operates within polyol metabolism; myo-inositol degradation into acetyl-CoA. In terms of biological role, involved in the reversible interconverion of 2-keto-myo-inositol (2KMI, inosose or 2,4,6/3,5-pentahydroxycyclohexanone) to 1-keto-D-chiro-inositol (1KDCI or 2,3,5/4,6-pentahydroxycyclohexanone). This Bacillus subtilis (strain 168) protein is Inosose isomerase (iolI).